The primary structure comprises 468 residues: Argininosuccinate synthase (468 aa).

Residues 10–18 (AYSGGLDTS) and alanine 37 contribute to the ATP site. Residues tyrosine 90 and serine 95 each contribute to the L-citrulline site. Glycine 120 contributes to the ATP binding site. Positions 122, 126, and 127 each coordinate L-aspartate. Residue asparagine 126 coordinates L-citrulline. L-citrulline-binding residues include arginine 130, serine 182, serine 191, glutamate 267, and tyrosine 279. The segment covering 445 to 457 (PVAAKATAKPVKA) has biased composition (low complexity). A disordered region spans residues 445 to 468 (PVAAKATAKPVKAPVKKPIAKKKG). Basic residues predominate over residues 458–468 (PVKKPIAKKKG).

The protein belongs to the argininosuccinate synthase family. Type 1 subfamily. As to quaternary structure, homotetramer.

It is found in the cytoplasm. It catalyses the reaction L-citrulline + L-aspartate + ATP = 2-(N(omega)-L-arginino)succinate + AMP + diphosphate + H(+). It functions in the pathway amino-acid biosynthesis; L-arginine biosynthesis; L-arginine from L-ornithine and carbamoyl phosphate: step 2/3. In Dechloromonas aromatica (strain RCB), this protein is Argininosuccinate synthase.